Here is an 823-residue protein sequence, read N- to C-terminus: MEKSLFDTKNLKITPMMKQYLDIKDKYKDSILLFRLGDFYEAFFDDALTVSKILNIVLTKRQDAPMAGIPYHALDNYLKKLVDAGYKVAICEQMEDPALAKGIVKREVTRVITPGTIIEDELLTTENNYMMSLYETKDGKISCILTDSSTGEVIIKQMESIDEISDFLQTHRVSQIICPENFYDKIVNIARVLGIFVDKLDDWYYENDIQTIKEAYGLVSIEHFELGEASKPLCATIKYINYTLNRQAKLKVPKTLDESKYMTLDSTTVENLSLIPGDKGKNLYDVLNKTNTPMGGRLLKWVILHPLKDRNEIEKRLWYVEAFYEDPLLTNEIREYLNGVYDLERIINRLEYDSAKPKDLISLKTTLEVVEPIKEALSTNEKLIQLAQMLPDLSQIKVKIENTLLEEFEGELGEGKIIKEGVSKELDEYRELLYHSNEKLKEFEERERAKTGIQKLKVSFNNVFGYYIEIPKGQVKFAPQEYTRIQTLVNAERYTTTELKEFEQKILAAKEKVEILEKTIFKQICDELKGYTQDLRKLAEMLSWIDVYSNFAYVSKLYSYSKPEISDSEFKVLNGRHPVVERFVDEFVPNDIYMSDELRMYILTGPNMSGKSTYIRQVGLIALMTQIGCFVPAQYAKVPVFDRIFTRMGARDDISTGKSTFLTEMNEVALILSKATQKSLVLLDEVGRGTSTFDGISIAWAMSEYIYNEIKCKTIFATHFTELTELSEGYSGIKNLTVDVKETPDGVVFLHKVVEGVADRSYGIEVAAIAGLPESIIERAKEILNIIVEKSDLEKKVGVLKEGQMKKIKATKKSVPEGQMKLF.

Residue glycine 605 to serine 612 participates in ATP binding.

This sequence belongs to the DNA mismatch repair MutS family.

In terms of biological role, this protein is involved in the repair of mismatches in DNA. It is possible that it carries out the mismatch recognition step. This protein has a weak ATPase activity. The sequence is that of DNA mismatch repair protein MutS from Fervidobacterium nodosum (strain ATCC 35602 / DSM 5306 / Rt17-B1).